The chain runs to 912 residues: Protein translocase subunit SecA (912 aa).

Residues Q87, 105-109, and D508 each bind ATP; that span reads GEGKT. Residues 865-912 are disordered; the sequence is DEEAAQVQSGNAPLPVSQVTRDEPKVGRNDPCPCGSGKKYKHCHGQLS. 4 residues coordinate Zn(2+): C896, C898, C907, and H908. Positions 902-912 are enriched in basic residues; it reads KKYKHCHGQLS.

This sequence belongs to the SecA family. As to quaternary structure, monomer and homodimer. Part of the essential Sec protein translocation apparatus which comprises SecA, SecYEG and auxiliary proteins SecDF-YajC and YidC. Requires Zn(2+) as cofactor.

Its subcellular location is the cell inner membrane. The protein resides in the cytoplasm. The enzyme catalyses ATP + H2O + cellular proteinSide 1 = ADP + phosphate + cellular proteinSide 2.. Part of the Sec protein translocase complex. Interacts with the SecYEG preprotein conducting channel. Has a central role in coupling the hydrolysis of ATP to the transfer of proteins into and across the cell membrane, serving both as a receptor for the preprotein-SecB complex and as an ATP-driven molecular motor driving the stepwise translocation of polypeptide chains across the membrane. The polypeptide is Protein translocase subunit SecA (Xanthomonas oryzae pv. oryzae (strain PXO99A)).